Reading from the N-terminus, the 138-residue chain is uncharacterized protein (138 aa).

This is an uncharacterized protein from Acanthamoeba polyphaga (Amoeba).